A 147-amino-acid polypeptide reads, in one-letter code: MQIESSYLGSIDIDVKKILQFPAGLPGFAEEKEFVILEIPENPMFHVLQSVHNPNLAFVITDPYQIYTSYTFELDDYTIESLQITSQEDVAVFAIMTLKEPFHKSTINLKAPIVINMKKQLAKQYVLNLDEYSSQASIQSPPLKEGE.

This sequence belongs to the FliW family. In terms of assembly, interacts with translational regulator CsrA and flagellin(s).

It is found in the cytoplasm. Acts as an anti-CsrA protein, binds CsrA and prevents it from repressing translation of its target genes, one of which is flagellin. Binds to flagellin and participates in the assembly of the flagellum. This is Flagellar assembly factor FliW from Oceanobacillus iheyensis (strain DSM 14371 / CIP 107618 / JCM 11309 / KCTC 3954 / HTE831).